We begin with the raw amino-acid sequence, 370 residues long: S-adenosylmethionine:tRNA ribosyltransferase-isomerase (370 aa).

This sequence belongs to the QueA family. In terms of assembly, monomer.

It is found in the cytoplasm. The catalysed reaction is 7-aminomethyl-7-carbaguanosine(34) in tRNA + S-adenosyl-L-methionine = epoxyqueuosine(34) in tRNA + adenine + L-methionine + 2 H(+). It participates in tRNA modification; tRNA-queuosine biosynthesis. Functionally, transfers and isomerizes the ribose moiety from AdoMet to the 7-aminomethyl group of 7-deazaguanine (preQ1-tRNA) to give epoxyqueuosine (oQ-tRNA). The protein is S-adenosylmethionine:tRNA ribosyltransferase-isomerase of Prochlorococcus marinus (strain SARG / CCMP1375 / SS120).